A 416-amino-acid polypeptide reads, in one-letter code: CC-adding tRNA nucleotidyltransferase (416 aa).

Residue 31–34 (GAVR) participates in CTP binding. Asp46 and Asp48 together coordinate Mg(2+). CTP is bound by residues 106–107 (RD), Asn111, 148–157 (DPLRLLRAYR), and Arg188.

This sequence belongs to the tRNA nucleotidyltransferase/poly(A) polymerase family. It depends on Mg(2+) as a cofactor.

It catalyses the reaction a tRNA precursor + 2 CTP = a tRNA with a 3' CC end + 2 diphosphate. Functionally, tRNA nucleotidyltransferase involved in the synthesis of the tRNA CCA terminus. Adds the two cytidine residues to tRNA. The sequence is that of CC-adding tRNA nucleotidyltransferase from Synechocystis sp. (strain ATCC 27184 / PCC 6803 / Kazusa).